A 201-amino-acid chain; its full sequence is ATP-dependent Clp protease proteolytic subunit 1 (201 aa).

S102 serves as the catalytic Nucleophile. The active site involves H127.

Belongs to the peptidase S14 family. In terms of assembly, fourteen ClpP subunits assemble into 2 heptameric rings which stack back to back to give a disk-like structure with a central cavity, resembling the structure of eukaryotic proteasomes.

It localises to the cytoplasm. The enzyme catalyses Hydrolysis of proteins to small peptides in the presence of ATP and magnesium. alpha-casein is the usual test substrate. In the absence of ATP, only oligopeptides shorter than five residues are hydrolyzed (such as succinyl-Leu-Tyr-|-NHMec, and Leu-Tyr-Leu-|-Tyr-Trp, in which cleavage of the -Tyr-|-Leu- and -Tyr-|-Trp bonds also occurs).. In terms of biological role, cleaves peptides in various proteins in a process that requires ATP hydrolysis. Has a chymotrypsin-like activity. Plays a major role in the degradation of misfolded proteins. The polypeptide is ATP-dependent Clp protease proteolytic subunit 1 (Mesorhizobium japonicum (strain LMG 29417 / CECT 9101 / MAFF 303099) (Mesorhizobium loti (strain MAFF 303099))).